A 437-amino-acid chain; its full sequence is GTPase Der (437 aa).

EngA-type G domains lie at 3-168 and 178-353; these read PLIA…PVQE and TNLA…ENRS. Residues 9 to 16, 56 to 60, 120 to 123, 184 to 191, 231 to 235, and 296 to 299 each bind GTP; these read GRPNVGKS, DTGGY, NKVE, DTAGL, and NKWD. The KH-like domain maps to 354–437; that stretch reads RKITTSALNR…VTVSLRFFKK (84 aa).

The protein belongs to the TRAFAC class TrmE-Era-EngA-EngB-Septin-like GTPase superfamily. EngA (Der) GTPase family. As to quaternary structure, associates with the 50S ribosomal subunit.

GTPase that plays an essential role in the late steps of ribosome biogenesis. This chain is GTPase Der, found in Chlorobium phaeobacteroides (strain DSM 266 / SMG 266 / 2430).